The chain runs to 68 residues: Palustrin-1c (68 aa).

Residues 1-22 (MFTMKKSLLLLFFLGTISLSLC) form the signal peptide. Positions 23–39 (EEERGADEEEGDGEKLT) are excised as a propeptide. Cysteine 62 and cysteine 68 are joined by a disulfide.

Expressed by the skin glands.

The protein localises to the secreted. In terms of biological role, antimicrobial peptide. The chain is Palustrin-1c from Odorrana versabilis (Chinese bamboo leaf odorous frog).